The chain runs to 398 residues: Odorant receptor 59b (398 aa).

The Cytoplasmic segment spans residues 1–46; sequence MAVFKLIKPAPLTEKVQSRQGNIYLYRAMWLIGWIPPKEGVLRYVY. The helical transmembrane segment at 47-67 threads the bilayer; the sequence is LFWTCVPFAFGVFYLPVGFII. Topologically, residues 68–84 are extracellular; sequence SYVQEFKNFTPGEFLTS. A helical transmembrane segment spans residues 85 to 105; sequence LQVCINVYGASVKSTITYLFL. Residues 106 to 141 lie on the Cytoplasmic side of the membrane; the sequence is WRLRKTEILLDSLDKRLANDSDRERIHNMVARCNYA. A helical membrane pass occupies residues 142–162; that stretch reads FLIYSFIYCGYAGSTFLSYAL. At 163 to 179 the chain is on the extracellular side; sequence SGRPPWSVYNPFIDWRD. The chain crosses the membrane as a helical span at residues 180–200; sequence GMGSLWIQAIFEYITMSFAVL. Over 201–269 the chain is Cytoplasmic; that stretch reads QDQLSDTYPL…DMIRPMISRT (69 aa). The chain crosses the membrane as a helical span at residues 270–290; the sequence is IFVQFALIGSVLGLTLVNVFF. Over 291-293 the chain is Extracellular; the sequence is FSN. Residues 294 to 314 form a helical membrane-spanning segment; that stretch reads FWKGVASLLFVITILLQTFPF. At 315-348 the chain is on the cytoplasmic side; sequence CYTCNMLIDDAQDLSNEIFQSNWVDAEPRYKATL. Residues 349-369 traverse the membrane as a helical segment; the sequence is VLFMHHVQQPIIFIAGGIFPI. Topologically, residues 370 to 398 are extracellular; it reads SMNSNITVAKFAFSIITIVRQMNLAEQFQ. Residue asparagine 374 is glycosylated (N-linked (GlcNAc...) asparagine).

This sequence belongs to the insect chemoreceptor superfamily. Heteromeric odorant receptor channel (TC 1.A.69) family. Or2a subfamily. In terms of assembly, interacts with Orco. Complexes exist early in the endomembrane system in olfactory sensory neurons (OSNs), coupling these complexes to the conserved ciliary trafficking pathway. As to expression, expressed in olfactory sensory neurons in the antenna.

It is found in the cell membrane. Odorant receptor which mediates acceptance or avoidance behavior, depending on its substrates. The odorant receptor repertoire encodes a large collection of odor stimuli that vary widely in identity, intensity, and duration. Forms a complex with Orco to form odorant-sensing units, providing sensitive and prolonged odorant signaling and calcium permeability. Also plays a role in the response to N,N-Diethyl-meta-toluamide (DEET), the most widely used insect repellent worldwide. The protein is Odorant receptor 59b (Or59b) of Drosophila melanogaster (Fruit fly).